The sequence spans 205 residues: Gap junction epsilon-1 protein (205 aa).

Topologically, residues 1–23 are cytoplasmic; sequence MSLNYIKNFYEGCVKPPTVIGQF. A helical membrane pass occupies residues 24 to 44; that stretch reads HTLFFGSIRIFFLGVLGFAVY. Over 45–76 the chain is Extracellular; the sequence is GNEALHFICDPDKREVNLFCYNQFRPITPQVS. Cystine bridges form between Cys53-Cys161 and Cys64-Cys148. The helical transmembrane segment at 77–97 threads the bilayer; it reads FSALQLVIVLVPGALFHLYAA. Residues 98–112 lie on the Cytoplasmic side of the membrane; that stretch reads CKSINQECILQKPIY. The chain crosses the membrane as a helical span at residues 113 to 133; it reads TIIYILSVLLRISLAAIAFWL. Topologically, residues 134–170 are extracellular; the sequence is QIYLFGFQVKSLYLCDARSLGENMIIRCMVPEHFEKT. A helical membrane pass occupies residues 171 to 191; sequence IFLIAINTFTTITILLFVAEI. The Cytoplasmic portion of the chain corresponds to 192-205; that stretch reads FEIIFRRLYFPFRQ.

This sequence belongs to the connexin family. Beta-type (group I) subfamily. A connexon is composed of a hexamer of connexins. In terms of tissue distribution, not detected in lens or retina.

Its subcellular location is the cell membrane. In terms of biological role, mediates calcium-independent ATP release, suggesting activity as a hemichannel. Does not form functional gap junctions. The sequence is that of Gap junction epsilon-1 protein (GJE1) from Homo sapiens (Human).